Reading from the N-terminus, the 339-residue chain is Phenylalanine--tRNA ligase alpha subunit (339 aa).

Residue E247 coordinates Mg(2+).

This sequence belongs to the class-II aminoacyl-tRNA synthetase family. Phe-tRNA synthetase alpha subunit type 1 subfamily. As to quaternary structure, tetramer of two alpha and two beta subunits. Requires Mg(2+) as cofactor.

The protein resides in the cytoplasm. It carries out the reaction tRNA(Phe) + L-phenylalanine + ATP = L-phenylalanyl-tRNA(Phe) + AMP + diphosphate + H(+). This Deinococcus radiodurans (strain ATCC 13939 / DSM 20539 / JCM 16871 / CCUG 27074 / LMG 4051 / NBRC 15346 / NCIMB 9279 / VKM B-1422 / R1) protein is Phenylalanine--tRNA ligase alpha subunit (pheS).